A 571-amino-acid chain; its full sequence is Proline--tRNA ligase (571 aa).

This sequence belongs to the class-II aminoacyl-tRNA synthetase family. ProS type 1 subfamily. As to quaternary structure, homodimer.

Its subcellular location is the cytoplasm. It catalyses the reaction tRNA(Pro) + L-proline + ATP = L-prolyl-tRNA(Pro) + AMP + diphosphate. In terms of biological role, catalyzes the attachment of proline to tRNA(Pro) in a two-step reaction: proline is first activated by ATP to form Pro-AMP and then transferred to the acceptor end of tRNA(Pro). As ProRS can inadvertently accommodate and process non-cognate amino acids such as alanine and cysteine, to avoid such errors it has two additional distinct editing activities against alanine. One activity is designated as 'pretransfer' editing and involves the tRNA(Pro)-independent hydrolysis of activated Ala-AMP. The other activity is designated 'posttransfer' editing and involves deacylation of mischarged Ala-tRNA(Pro). The misacylated Cys-tRNA(Pro) is not edited by ProRS. In Azotobacter vinelandii (strain DJ / ATCC BAA-1303), this protein is Proline--tRNA ligase.